A 185-amino-acid chain; its full sequence is Early nodulin-like protein 17 (185 aa).

A signal peptide spans 1 to 21 (MARRDQLVSFLCFFLIVSAVA). The region spanning 37 to 137 (KQYVVGGRSG…GQRLMINVDS (101 aa)) is the Phytocyanin domain. N-linked (GlcNAc...) asparagine glycosylation is found at N79 and N94. A disulfide bridge links C93 with C125. The interval 136–155 (DSAPSPSPSPSPAPQEAATA) is disordered. Residue S156 is the site of GPI-anchor amidated serine attachment. Residues 157–185 (AATSSSAATAAHALLLAAMAMMGLILGEW) constitute a propeptide, removed in mature form.

The protein belongs to the early nodulin-like (ENODL) family. As to expression, expressed ubiquitously. Accumulates mainly in anthers, stigmas and ovaries.

Its subcellular location is the cell membrane. Functionally, may act as a carbohydrate transporter. Required for male fertility and seed yield. This is Early nodulin-like protein 17 from Oryza sativa subsp. japonica (Rice).